A 172-amino-acid chain; its full sequence is UPF0316 protein Clos_0555 (172 aa).

Transmembrane regions (helical) follow at residues 3-23 (ALLG…MATI), 34-54 (VIAA…IGKV), and 61-81 (PLNV…GIFL).

This sequence belongs to the UPF0316 family.

It is found in the cell membrane. The chain is UPF0316 protein Clos_0555 from Alkaliphilus oremlandii (strain OhILAs) (Clostridium oremlandii (strain OhILAs)).